We begin with the raw amino-acid sequence, 262 residues long: Small ribosomal subunit protein eS4y (262 aa).

The region spanning 42–104 is the S4 RNA-binding domain; that stretch reads LPLVLIIRNR…TNENFRLLYD (63 aa).

It belongs to the eukaryotic ribosomal protein eS4 family.

It is found in the cytoplasm. In Arabidopsis thaliana (Mouse-ear cress), this protein is Small ribosomal subunit protein eS4y (RPS4B).